Reading from the N-terminus, the 490-residue chain is GTPase Der (490 aa).

EngA-type G domains lie at Pro3–Leu166 and Ile203–Thr376. GTP-binding positions include Gly9 to Ser16, Asp56 to Ile60, Asn118 to Asp121, Gly209 to Ser216, Asp256 to Val260, and Asn321 to Asp324. Residues Arg377–Glu461 enclose the KH-like domain.

Belongs to the TRAFAC class TrmE-Era-EngA-EngB-Septin-like GTPase superfamily. EngA (Der) GTPase family. As to quaternary structure, associates with the 50S ribosomal subunit.

In terms of biological role, GTPase that plays an essential role in the late steps of ribosome biogenesis. This is GTPase Der from Shigella boydii serotype 18 (strain CDC 3083-94 / BS512).